The following is an 888-amino-acid chain: Inactive deaminase YJL070C (888 aa).

A disordered region spans residues 1–42 (MQAVERRPSLLFDEYQNSVTKPNETKNKEARVLSENDGDVSP). Residue Ser9 is modified to Phosphoserine. The span at 23–34 (NETKNKEARVLS) shows a compositional bias: basic and acidic residues. Residues Ser41, Ser178, and Ser180 each carry the phosphoserine modification.

It belongs to the metallo-dependent hydrolases superfamily. Adenosine and AMP deaminases family.

In Saccharomyces cerevisiae (strain ATCC 204508 / S288c) (Baker's yeast), this protein is Inactive deaminase YJL070C.